A 586-amino-acid polypeptide reads, in one-letter code: Arginine--tRNA ligase (586 aa).

A 'HIGH' region motif is present at residues 127–137 (PNVAKEMHVGH).

It belongs to the class-I aminoacyl-tRNA synthetase family. Monomer.

The protein resides in the cytoplasm. It carries out the reaction tRNA(Arg) + L-arginine + ATP = L-arginyl-tRNA(Arg) + AMP + diphosphate. The chain is Arginine--tRNA ligase (argS) from Streptomyces coelicolor (strain ATCC BAA-471 / A3(2) / M145).